A 338-amino-acid chain; its full sequence is UDP-glucose 4-epimerase (338 aa).

NAD(+) is bound by residues 11–12, 31–36, 58–59, 80–84, asparagine 99, serine 124, tyrosine 149, lysine 153, and phenylalanine 178; these read YI, DNLCNS, DI, and FAGLK. Positions 124 and 149 each coordinate substrate. Tyrosine 149 functions as the Proton acceptor in the catalytic mechanism. Residues asparagine 179, 199-200, 216-218, arginine 231, and 292-295 each bind substrate; these read NL, SVF, and RPGD.

Belongs to the NAD(P)-dependent epimerase/dehydratase family. As to quaternary structure, homodimer. NAD(+) serves as cofactor.

The enzyme catalyses UDP-alpha-D-glucose = UDP-alpha-D-galactose. Its pathway is carbohydrate metabolism; galactose metabolism. Its function is as follows. Involved in the metabolism of galactose. Catalyzes the conversion of UDP-galactose (UDP-Gal) to UDP-glucose (UDP-Glc) through a mechanism involving the transient reduction of NAD. This Pasteurella multocida (strain Pm70) protein is UDP-glucose 4-epimerase (galE).